Consider the following 661-residue polypeptide: MIKTYDSNEYDVIVVGAGHAGCEAALASAHMGQKTLLVTIGLDMVAFMPCNPSVGGPAKGTVVREIDALGGQMGKNIDATYIQMRMLNTGKGPAVRALRAQADKWQYHEHMKDTIENTPNLTLRQAIVDQLVVEDGVCKGVITNTGAKYHAKSVVLTTGTAARGKIIIGELTYSSGPNNTTPSIKLSENLEKLGFKLRRFKTGTPPRVNGNTIDYSKTEEEPGDKTPRHFSYESKDVDYLKNQISCWMTYTNNGTHEIIRENLNRAPMFSGIIKGVGPRYCPSIEDKVVRFADKDRHQIFLEPEGRTTKEVYVGDFSTSMPEEIQLKMVHSVAGLEHAEMMRPGYAIEYDVVEPWQLKHTLETKNIKHLFTAGQMNGTSGYEEAAGQGLIAGINAALSAQDKPGFTLGRNDAYIGVLIDDLVTKGTNEPYRLLTSRAEYRLILRHDNADLRLTEYGHELGLISDERYEKFEEKKQAIRDAKERLHEITVHLSDDVQEFLKSIGQEPMKAGVKADVFLRRPNVKIADIERLTGEKIPGDRYVKEQVEIGIKYAGYIKKEETRIARLKRQEAKKIPADIDYEMIEGLATEARQKFEKIRPETLAQAERISGVNPADLAILSVYIQNGRYSKVKKYEAEDLKPSSYFAEKYGLEADAETGASQY.

Residues 16–21, Val-128, and Ser-183 contribute to the FAD site; that span reads GAGHAG. A disordered region spans residues 206–230; it reads PRVNGNTIDYSKTEEEPGDKTPRHF. A compositionally biased stretch (basic and acidic residues) spans 216–230; it reads SKTEEEPGDKTPRHF. Position 277-291 (277-291) interacts with NAD(+); it reads GPRYCPSIEDKVVRF. An FAD-binding site is contributed by Gln-374.

It belongs to the MnmG family. Homodimer. Heterotetramer of two MnmE and two MnmG subunits. Requires FAD as cofactor.

It localises to the cytoplasm. Functionally, NAD-binding protein involved in the addition of a carboxymethylaminomethyl (cmnm) group at the wobble position (U34) of certain tRNAs, forming tRNA-cmnm(5)s(2)U34. In Lactobacillus helveticus (strain DPC 4571), this protein is tRNA uridine 5-carboxymethylaminomethyl modification enzyme MnmG.